The primary structure comprises 229 residues: MAKISKRATAHGGKFDRSVNHPLSDAIKIIKECATAKFDETIEVAVNLGVDPRHADQMVRGSVSLPKGTGKVVRVLVFAKGEKAEEAKAAGADVVGADDLLEKIQGGWLEFDRVVATPDVMGVVGRLGKILGPRNMMPNPKLGTVTFDVAKVVQEIKAGQVAFRVEKSGIIHAGVGKASFPVEDLVENITALVEQLRRMKPAAAKGTYMKKVSISSTMGPGIKVDQSSI.

It belongs to the universal ribosomal protein uL1 family. As to quaternary structure, part of the 50S ribosomal subunit.

Binds directly to 23S rRNA. The L1 stalk is quite mobile in the ribosome, and is involved in E site tRNA release. In terms of biological role, protein L1 is also a translational repressor protein, it controls the translation of the L11 operon by binding to its mRNA. This Magnetococcus marinus (strain ATCC BAA-1437 / JCM 17883 / MC-1) protein is Large ribosomal subunit protein uL1.